The following is a 255-amino-acid chain: Small ribosomal subunit protein uS2 (255 aa).

This sequence belongs to the universal ribosomal protein uS2 family.

This Geotalea daltonii (strain DSM 22248 / JCM 15807 / FRC-32) (Geobacter daltonii) protein is Small ribosomal subunit protein uS2.